The sequence spans 179 residues: Guanosine-3',5'-bis(diphosphate) 3'-pyrophosphohydrolase MESH1 (179 aa).

The residue at position 2 (G2) is an N-acetylglycine. K25 carries the N6-acetyllysine modification. An HD domain is found at 32-127 (YINHPIGVAR…VKLADKLYNL (96 aa)). Mn(2+) contacts are provided by H35, H61, and D62. Catalysis depends on nucleophile residues E65 and D66. K97 is subject to N6-acetyllysine. D122 serves as a coordination point for Mn(2+). N6-acetyllysine is present on K123.

It belongs to the MESH1 family. Mn(2+) is required as a cofactor.

The enzyme catalyses guanosine 3',5'-bis(diphosphate) + H2O = GDP + diphosphate + H(+). Functionally, ppGpp hydrolyzing enzyme involved in starvation response. The protein is Guanosine-3',5'-bis(diphosphate) 3'-pyrophosphohydrolase MESH1 (Hddc3) of Mus musculus (Mouse).